We begin with the raw amino-acid sequence, 82 residues long: MSEASSAPVRRPFHRRRKTCPFSGANAPRIDYKDVRLLQRYISERGKIVPSRITAVSQKKQRELAQAIKRARFLGLLPYVVA.

Residues 1-20 (MSEASSAPVRRPFHRRRKTC) form a disordered region.

The protein belongs to the bacterial ribosomal protein bS18 family. As to quaternary structure, part of the 30S ribosomal subunit. Forms a tight heterodimer with protein bS6.

Binds as a heterodimer with protein bS6 to the central domain of the 16S rRNA, where it helps stabilize the platform of the 30S subunit. This chain is Small ribosomal subunit protein bS18, found in Rhizobium etli (strain CIAT 652).